The chain runs to 393 residues: Phosphoglycerate kinase (393 aa).

Substrate-binding positions include D21–N23, H59–R62, R118, and R151. ATP-binding positions include K201, E323, and G349–T352.

The protein belongs to the phosphoglycerate kinase family. Monomer.

It localises to the cytoplasm. It carries out the reaction (2R)-3-phosphoglycerate + ATP = (2R)-3-phospho-glyceroyl phosphate + ADP. It functions in the pathway carbohydrate degradation; glycolysis; pyruvate from D-glyceraldehyde 3-phosphate: step 2/5. The protein is Phosphoglycerate kinase of Pelotomaculum thermopropionicum (strain DSM 13744 / JCM 10971 / SI).